Reading from the N-terminus, the 314-residue chain is 4-hydroxy-3-methylbut-2-enyl diphosphate reductase (314 aa).

C12 is a binding site for [4Fe-4S] cluster. (2E)-4-hydroxy-3-methylbut-2-enyl diphosphate-binding residues include H41 and H74. The dimethylallyl diphosphate site is built by H41 and H74. Positions 41 and 74 each coordinate isopentenyl diphosphate. C96 contacts [4Fe-4S] cluster. H124 is a (2E)-4-hydroxy-3-methylbut-2-enyl diphosphate binding site. A dimethylallyl diphosphate-binding site is contributed by H124. Isopentenyl diphosphate is bound at residue H124. The Proton donor role is filled by E126. (2E)-4-hydroxy-3-methylbut-2-enyl diphosphate is bound at residue T168. Position 198 (C198) interacts with [4Fe-4S] cluster. 4 residues coordinate (2E)-4-hydroxy-3-methylbut-2-enyl diphosphate: S226, S227, N228, and S270. Residues S226, S227, N228, and S270 each contribute to the dimethylallyl diphosphate site. Residues S226, S227, N228, and S270 each coordinate isopentenyl diphosphate.

Belongs to the IspH family. It depends on [4Fe-4S] cluster as a cofactor.

The catalysed reaction is isopentenyl diphosphate + 2 oxidized [2Fe-2S]-[ferredoxin] + H2O = (2E)-4-hydroxy-3-methylbut-2-enyl diphosphate + 2 reduced [2Fe-2S]-[ferredoxin] + 2 H(+). It carries out the reaction dimethylallyl diphosphate + 2 oxidized [2Fe-2S]-[ferredoxin] + H2O = (2E)-4-hydroxy-3-methylbut-2-enyl diphosphate + 2 reduced [2Fe-2S]-[ferredoxin] + 2 H(+). Its pathway is isoprenoid biosynthesis; dimethylallyl diphosphate biosynthesis; dimethylallyl diphosphate from (2E)-4-hydroxy-3-methylbutenyl diphosphate: step 1/1. It participates in isoprenoid biosynthesis; isopentenyl diphosphate biosynthesis via DXP pathway; isopentenyl diphosphate from 1-deoxy-D-xylulose 5-phosphate: step 6/6. Its function is as follows. Catalyzes the conversion of 1-hydroxy-2-methyl-2-(E)-butenyl 4-diphosphate (HMBPP) into a mixture of isopentenyl diphosphate (IPP) and dimethylallyl diphosphate (DMAPP). Acts in the terminal step of the DOXP/MEP pathway for isoprenoid precursor biosynthesis. This Pseudomonas aeruginosa (strain ATCC 15692 / DSM 22644 / CIP 104116 / JCM 14847 / LMG 12228 / 1C / PRS 101 / PAO1) protein is 4-hydroxy-3-methylbut-2-enyl diphosphate reductase.